Here is a 98-residue protein sequence, read N- to C-terminus: Large ribosomal subunit protein bL27 (98 aa).

Positions 1–10 are excised as a propeptide; it reads MELKMNLQLF. Positions 11–30 are disordered; the sequence is AQKKGTGSSKNGRDSISKRL.

It belongs to the bacterial ribosomal protein bL27 family. The N-terminus is cleaved by ribosomal processing cysteine protease Prp.

This chain is Large ribosomal subunit protein bL27, found in Natranaerobius thermophilus (strain ATCC BAA-1301 / DSM 18059 / JW/NM-WN-LF).